The following is a 256-amino-acid chain: 3-deoxy-manno-octulosonate cytidylyltransferase (256 aa).

The protein belongs to the KdsB family.

It localises to the cytoplasm. The catalysed reaction is 3-deoxy-alpha-D-manno-oct-2-ulosonate + CTP = CMP-3-deoxy-beta-D-manno-octulosonate + diphosphate. Its pathway is nucleotide-sugar biosynthesis; CMP-3-deoxy-D-manno-octulosonate biosynthesis; CMP-3-deoxy-D-manno-octulosonate from 3-deoxy-D-manno-octulosonate and CTP: step 1/1. It functions in the pathway bacterial outer membrane biogenesis; lipopolysaccharide biosynthesis. Functionally, activates KDO (a required 8-carbon sugar) for incorporation into bacterial lipopolysaccharide in Gram-negative bacteria. The chain is 3-deoxy-manno-octulosonate cytidylyltransferase from Histophilus somni (strain 2336) (Haemophilus somnus).